Consider the following 792-residue polypeptide: MKFSENWLRSHVPIQATRDELAATLTAIGLEVEEVIPLGESLGQVVVARIVEAMRHPEADRLQVCSVDAGQGELLQIVCGAPNARPGLVAPLALVGAKIGELTITAAKLRGVASNGMLCSAKELGLDSDAAGLFELPDDAPVGQALAEYLGLPDASIEIKLTPNRADCFSVRGIAFDVAAACASEVVAFDAGAVAPVSTRTLAVELDAGKDAPRYCGRVIEGIDPAAKTPVWLAERLRRSGVRPVSLLVDITQYVMLELGQPMHAFDLDTLHGPIGVRRSCAGEQLALLDGRQVTLDDSFLTIADAGRPVALAGLMGGLDTRVTETTRNVFLESAYFDPAAIMGRGRKLGLHTDAGHRFERGVDSALPPQAIEVATRLVLELAGGTPGPVVHAQLPQHLPQPARILLRRARIARVLGIQIDDVDVVRMLRALGMQLDAVAEGWEVMAPSRRFDIAIEEDLIEDLARIHGYDRVPTTLPGGASRIAMPSETQLDELSVRRQLVARELQETINYAFVDAALLERWQLTNGLVPLANPLSAELAIMRPCLLPGLVATLGRNAARQAGRVRLFELGKVFAAAADAGAAPQESQHVAAAVCGDALALQWGEAARKVDFHDVKGDLMALAAASGAQLEFQPSTQPFGHPGRSADIYRDGVCIGWIGQVHPRLAKALDIDVDVIAFELQLGPLVQRTLPCAGELSRFPSVRRDLAFLVPDEVSWAAVSASVRTTVGPLLREVQLFDRYVGQGVAPGFKSLAMGLILQDNSRTLTDRDVDAVVTDVVAVIEREHRARIRS.

The tRNA-binding domain occupies Gly-39–Ala-147. The B5 domain maps to Pro-400–Thr-475. Residues Asp-453, Asp-459, Glu-462, and Asp-463 each contribute to the Mg(2+) site. An FDX-ACB domain is found at Ser-698–Arg-791.

This sequence belongs to the phenylalanyl-tRNA synthetase beta subunit family. Type 1 subfamily. In terms of assembly, tetramer of two alpha and two beta subunits. Mg(2+) is required as a cofactor.

The protein resides in the cytoplasm. It carries out the reaction tRNA(Phe) + L-phenylalanine + ATP = L-phenylalanyl-tRNA(Phe) + AMP + diphosphate + H(+). This Xanthomonas oryzae pv. oryzae (strain MAFF 311018) protein is Phenylalanine--tRNA ligase beta subunit.